A 351-amino-acid polypeptide reads, in one-letter code: Cytochrome c biogenesis protein CcsA (351 aa).

8 helical membrane passes run 17 to 37 (VLFLTMLLYWIGAAFPGLPAI), 38 to 58 (NALGTAGMAIANLSIATLLGA), 68 to 88 (LSNLYESLFFLSWGITTVHLI), 97 to 117 (LVGVFTTPVAMGIVAFATLTL), 143 to 163 (MMLSYSALMVGSLLAIAFLVI), 259 to 279 (IIGLGFPLLTIGIIAGAVWAN), 286 to 306 (WSWDPKETWALITWLVFAAYL), and 320 to 340 (AILAASGFVVVWICYLGVNLL).

The protein belongs to the CcmF/CycK/Ccl1/NrfE/CcsA family. In terms of assembly, may interact with ccs1.

Its subcellular location is the cellular thylakoid membrane. Required during biogenesis of c-type cytochromes (cytochrome c6 and cytochrome f) at the step of heme attachment. The sequence is that of Cytochrome c biogenesis protein CcsA from Nostoc sp. (strain PCC 7120 / SAG 25.82 / UTEX 2576).